Here is a 200-residue protein sequence, read N- to C-terminus: Putative hydrolase MhqD (200 aa).

Catalysis depends on charge relay system residues S100, D150, and H181.

This sequence belongs to the AB hydrolase superfamily. AB hydrolase 2 family.

The protein localises to the cytoplasm. Its function is as follows. Putative hydrolase that may contribute to the degradation of aromatic compounds. In Bacillus subtilis (strain 168), this protein is Putative hydrolase MhqD (mhqD).